The following is a 287-amino-acid chain: Eukaryotic translation initiation factor 3 subunit G (287 aa).

Disordered regions lie at residues 1–34 (MSKL…KDGT) and 159–184 (TAGG…YVPP). Positions 207–285 (ATLRVTNVSE…LILRVEFAKR (79 aa)) constitute an RRM domain.

Belongs to the eIF-3 subunit G family. In terms of assembly, component of the eukaryotic translation initiation factor 3 (eIF-3) complex.

The protein localises to the cytoplasm. Functionally, RNA-binding component of the eukaryotic translation initiation factor 3 (eIF-3) complex, which is involved in protein synthesis of a specialized repertoire of mRNAs and, together with other initiation factors, stimulates binding of mRNA and methionyl-tRNAi to the 40S ribosome. The eIF-3 complex specifically targets and initiates translation of a subset of mRNAs involved in cell proliferation. This subunit can bind 18S rRNA. This Aspergillus oryzae (strain ATCC 42149 / RIB 40) (Yellow koji mold) protein is Eukaryotic translation initiation factor 3 subunit G (tif35).